The following is a 311-amino-acid chain: Probable protein phosphatase 2C 59 (311 aa).

The segment covering 1-14 (MGYLNSVLSSSSQV) has biased composition (low complexity). Residues 1–26 (MGYLNSVLSSSSQVHSDDGPVSGGGL) form a disordered region. The PPM-type phosphatase domain maps to 33 to 279 (SYGYASSPGK…DNITCVVVRF (247 aa)). Mn(2+) is bound by residues aspartate 69, glycine 70, aspartate 231, and aspartate 270.

The protein belongs to the PP2C family. In terms of assembly, interacts with the Pseudomonas syringae pv. maculicola effector HopW1-1 (via C-terminus). Requires Mg(2+) as cofactor. Mn(2+) is required as a cofactor.

The enzyme catalyses O-phospho-L-seryl-[protein] + H2O = L-seryl-[protein] + phosphate. It catalyses the reaction O-phospho-L-threonyl-[protein] + H2O = L-threonyl-[protein] + phosphate. With respect to regulation, inhibited by sodium fluoride (NaF). Protein phosphatase that modulates defense response to pathogenic bacteria, conferring resistance and promoting salicylic acid (SA) accumulation. This is Probable protein phosphatase 2C 59 (WIN2) from Arabidopsis thaliana (Mouse-ear cress).